Here is a 402-residue protein sequence, read N- to C-terminus: F-box/kelch-repeat protein At4g39590 (402 aa).

The span at 1–14 (MFPMSSTSRSSAAN) shows a compositional bias: low complexity. The tract at residues 1–37 (MFPMSSTSRSSAANNRKDPPRKKNKETPSPVTREPTS) is disordered. The segment covering 27-37 (TPSPVTREPTS) has biased composition (polar residues). Positions 35 to 81 (PTSIDSLPNDLLLNCFARVSRMYYPALSRVSKRFRSIVTSPEIYNTR) constitute an F-box domain. 4 Kelch repeats span residues 143-198 (NIYR…VVDG), 199-246 (KIYV…YRRA), 255-300 (KLYL…LFYW), and 302-341 (QGVFKWYDSKVSSWKQLKGLEGLPDDFSQREYCKLVDLGG).

This Arabidopsis thaliana (Mouse-ear cress) protein is F-box/kelch-repeat protein At4g39590.